The primary structure comprises 147 residues: uncharacterized protein (147 aa).

The 104-residue stretch at 44-147 (LVGYIDKEIH…LKSIKERLSI (104 aa)) folds into the HTH LytTR-type domain.

Its subcellular location is the cytoplasm. This is an uncharacterized protein from Staphylococcus aureus (strain MW2).